A 269-amino-acid chain; its full sequence is 3-methyl-2-oxobutanoate hydroxymethyltransferase (269 aa).

Mg(2+) contacts are provided by D50 and D89. Residues 50–51, D89, and K118 each bind 3-methyl-2-oxobutanoate; that span reads DS. E120 is a Mg(2+) binding site. Residue E187 is the Proton acceptor of the active site.

This sequence belongs to the PanB family. Homodecamer; pentamer of dimers. Mg(2+) serves as cofactor.

It is found in the cytoplasm. The enzyme catalyses 3-methyl-2-oxobutanoate + (6R)-5,10-methylene-5,6,7,8-tetrahydrofolate + H2O = 2-dehydropantoate + (6S)-5,6,7,8-tetrahydrofolate. The protein operates within cofactor biosynthesis; (R)-pantothenate biosynthesis; (R)-pantoate from 3-methyl-2-oxobutanoate: step 1/2. Functionally, catalyzes the reversible reaction in which hydroxymethyl group from 5,10-methylenetetrahydrofolate is transferred onto alpha-ketoisovalerate to form ketopantoate. This Nitrosomonas europaea (strain ATCC 19718 / CIP 103999 / KCTC 2705 / NBRC 14298) protein is 3-methyl-2-oxobutanoate hydroxymethyltransferase.